The following is a 64-amino-acid chain: Small ribosomal subunit protein eS17 (64 aa).

This sequence belongs to the eukaryotic ribosomal protein eS17 family.

In Methanosarcina mazei (strain ATCC BAA-159 / DSM 3647 / Goe1 / Go1 / JCM 11833 / OCM 88) (Methanosarcina frisia), this protein is Small ribosomal subunit protein eS17.